A 364-amino-acid polypeptide reads, in one-letter code: Flavonoid 3'-O-methyltransferase 3 (364 aa).

Aspartate 232 is an S-adenosyl-L-methionine binding site. Residue histidine 270 is the Proton acceptor of the active site.

The protein belongs to the class I-like SAM-binding methyltransferase superfamily. Cation-independent O-methyltransferase family. In terms of assembly, homodimer.

The enzyme catalyses quercetin + S-adenosyl-L-methionine = isorhamnetin + S-adenosyl-L-homocysteine + H(+). It catalyses the reaction luteolin + S-adenosyl-L-methionine = chrysoeriol + S-adenosyl-L-homocysteine + H(+). The catalysed reaction is a 3'-hydroxyflavone + S-adenosyl-L-methionine = a 3'-methoxyflavone + S-adenosyl-L-homocysteine + H(+). It carries out the reaction rhamnetin + S-adenosyl-L-methionine = rhamnacene + S-adenosyl-L-homocysteine + H(+). The enzyme catalyses 3',4',7,8-tetrahydroxyflavone + S-adenosyl-L-methionine = 4',7,8-trihydroxy-3'-methoxyflavone-7-olate + S-adenosyl-L-homocysteine + H(+). It catalyses the reaction taxifolin + S-adenosyl-L-methionine = taxifolin 3'-methyl ether + S-adenosyl-L-homocysteine + H(+). Its pathway is flavonoid metabolism. In terms of biological role, flavonoid 3'-O-methyltransferase involved in the biosynthesis of polymethoxylated flavonoids natural products such as pebrellin, aroma compounds which contribute to the flavor of peppermint, and exhibit pharmacological activities such as anti-allergic, anti-oxidant, antibacterial, anti-proliferative, and anti-inflammatory effects. Catalyzes S-adenosylmethionine-dependent regioselective 3'-O-methylation of flavonoids; active on various hydroxylated flavonoid substrates, including quercetin, rhamnetin, luteolin (LUT), 7,8,3'4'-tetrahydroxy-flavone and taxifolin, and, with a lower efficiency, eupatorin and hesperetin. The polypeptide is Flavonoid 3'-O-methyltransferase 3 (Mentha piperita (Peppermint)).